The sequence spans 269 residues: Formamidopyrimidine-DNA glycosylase (269 aa).

The active-site Schiff-base intermediate with DNA is the Pro-2. Glu-3 acts as the Proton donor in catalysis. Lys-57 (proton donor; for beta-elimination activity) is an active-site residue. DNA contacts are provided by His-90, Arg-109, and Lys-150. The FPG-type zinc finger occupies 235–269; it reads QVYGKGGKPCPRCDNPLSEMKIGQRASVFCSECQK. The active-site Proton donor; for delta-elimination activity is Arg-259.

This sequence belongs to the FPG family. Monomer. Zn(2+) is required as a cofactor.

The catalysed reaction is Hydrolysis of DNA containing ring-opened 7-methylguanine residues, releasing 2,6-diamino-4-hydroxy-5-(N-methyl)formamidopyrimidine.. It catalyses the reaction 2'-deoxyribonucleotide-(2'-deoxyribose 5'-phosphate)-2'-deoxyribonucleotide-DNA = a 3'-end 2'-deoxyribonucleotide-(2,3-dehydro-2,3-deoxyribose 5'-phosphate)-DNA + a 5'-end 5'-phospho-2'-deoxyribonucleoside-DNA + H(+). Involved in base excision repair of DNA damaged by oxidation or by mutagenic agents. Acts as a DNA glycosylase that recognizes and removes damaged bases. Has a preference for oxidized purines, such as 7,8-dihydro-8-oxoguanine (8-oxoG). Has AP (apurinic/apyrimidinic) lyase activity and introduces nicks in the DNA strand. Cleaves the DNA backbone by beta-delta elimination to generate a single-strand break at the site of the removed base with both 3'- and 5'-phosphates. The chain is Formamidopyrimidine-DNA glycosylase from Photobacterium profundum (strain SS9).